A 66-amino-acid chain; its full sequence is Large ribosomal subunit protein bL35 (66 aa).

Residues 20–40 (GKIKSTQSAKRHGMTKRSKRS) are disordered. Positions 28 to 40 (AKRHGMTKRSKRS) are enriched in basic residues.

The protein belongs to the bacterial ribosomal protein bL35 family.

The sequence is that of Large ribosomal subunit protein bL35 from Ehrlichia chaffeensis (strain ATCC CRL-10679 / Arkansas).